The chain runs to 189 residues: UPF0340 protein EF_1967 (189 aa).

Belongs to the UPF0340 family.

In Enterococcus faecalis (strain ATCC 700802 / V583), this protein is UPF0340 protein EF_1967.